The following is a 270-amino-acid chain: Short chain dehydrogenase/reductase dpfgG (270 aa).

NADP(+) contacts are provided by Ile18, Asp69, Asn96, Lys130, Lys171, Ile200, and Asn204. The active-site Lowers pKa of active site Tyr is the Lys171.

This sequence belongs to the short-chain dehydrogenases/reductases (SDR) family.

It functions in the pathway secondary metabolite biosynthesis; terpenoid biosynthesis. Short chain dehydrogenase/reductase; part of the gene cluster that mediates the biosynthesis of diterpenoid pyrones. The first step of the pathway is the synthesis of the alpha-pyrone moiety by the polyketide synthase dpfgA via condensation of one acetyl-CoA starter unit with 3 malonyl-CoA units and 2 methylations. The alpha-pyrone is then combined with geranylgeranyl pyrophosphate (GGPP) formed by the GGPP synthase dpfgD through the action of the prenyltransferase dpfgC to yield a linear alpha-pyrone diterpenoid. Subsequent steps in the diterpenoid pyrone biosynthetic pathway involve the decalin core formation, which is initiated by the epoxidation of the C10-C11 olefin by the FAD-dependent oxidoreductase dpfgE, and is followed by a cyclization cascade catalyzed by the terpene cyclase dpfgB. The short chain dehydrogenase/reductase dpfgG then oxidizes the 8S hydroxy group to a ketone and the short chain dehydrogenase/reductase dpfgH reduces the ketone to the 8R hydroxy group to yield higginsianin B. Higginsianin B is further methylated by the methyltransferase dpfgI to produce the intermediate named FDDP B. The cytochrome P450 monooxygenase dfgpJ then catalyzes a three-step oxidation at C-27 to generate a carboxylic acid as well as C-26 hydroxylation. Finally, methyltransferase dpfgK methylates the carboxylic acid generated by dpfgJ, yielding the final diterpenoid pyrones from the pathway which were named FDDP D and FDDP E. The protein is Short chain dehydrogenase/reductase dpfgG of Gibberella zeae (strain ATCC MYA-4620 / CBS 123657 / FGSC 9075 / NRRL 31084 / PH-1) (Wheat head blight fungus).